Here is a 593-residue protein sequence, read N- to C-terminus: uncharacterized protein (593 aa).

This is an uncharacterized protein from Sinorhizobium fredii (strain NBRC 101917 / NGR234).